Here is a 605-residue protein sequence, read N- to C-terminus: Tyrosyl-DNA phosphodiesterase 1 (605 aa).

The short motif at 81–86 (RKKVKP) is the Nuclear localization signal element. The Nucleophile role is filled by H236. K238 is a binding site for substrate. The tract at residues 379-382 (SLGS) is interaction with DNA. Catalysis depends on H466, which acts as the Proton donor/acceptor. K468 lines the substrate pocket.

Belongs to the tyrosyl-DNA phosphodiesterase family. As to expression, ubiquitous, with a low level in roots.

It localises to the nucleus. With respect to regulation, inhibited by vanadate analogs. In terms of biological role, DNA repair enzyme that can remove a variety of covalent adducts from DNA through hydrolysis of a 3'-phosphodiester bond, giving rise to DNA with a free 3' phosphate. Catalyzes the hydrolysis of dead-end complexes between DNA and the topoisomerase I active site tyrosine residue. The chain is Tyrosyl-DNA phosphodiesterase 1 from Arabidopsis thaliana (Mouse-ear cress).